We begin with the raw amino-acid sequence, 393 residues long: Inulin fructotransferase [DFA-I-forming] (393 aa).

The enzyme catalyses Produces alpha-D-fructofuranose beta-D-fructofuranose 1,2':2,1'-dianhydride (DFA I) by successively eliminating the diminishing (2-&gt;1)-beta-D-fructan (inulin) chain from the terminal D-fructosyl-D-fructosyl disaccharide.. This is Inulin fructotransferase [DFA-I-forming] from Arthrobacter globiformis.